The primary structure comprises 255 residues: MTLTIKEVTQLINAVNTIEELENHECFLDERKGVQNAIARRRKALEKEQALKEKYVEMTYFENEILKEHPNAIICGIDEVGRGPLAGPVVACATILNSNHNYLGLDDSKKVPITKRLELNEALKNEVTAFAYGIATAEEIDEFNIYKATQIAMQRAIDGLSVQPTHLLIDAMTLDNALPQVSLIKGDARSVSIAAASIMAKVFRDDYMTQLSKDYPEYGFEKNAGYGTKQHLLAIDDIGIMKEHRKSFEPIKSLL.

Residues alanine 72–leucine 255 form the RNase H type-2 domain. Residues aspartate 78, glutamate 79, and aspartate 170 each contribute to the a divalent metal cation site.

This sequence belongs to the RNase HII family. The cofactor is Mn(2+). It depends on Mg(2+) as a cofactor.

Its subcellular location is the cytoplasm. The catalysed reaction is Endonucleolytic cleavage to 5'-phosphomonoester.. In terms of biological role, endonuclease that specifically degrades the RNA of RNA-DNA hybrids. This chain is Ribonuclease HII, found in Staphylococcus aureus (strain Mu3 / ATCC 700698).